The sequence spans 224 residues: Vesicle transport through interaction with t-SNAREs homolog 1A (224 aa).

The Cytoplasmic portion of the chain corresponds to 1–199; the sequence is MSADFEGYEQ…GMLRRIIQNR (199 aa). Coiled-coil stretches lie at residues 31 to 92 and 106 to 185; these read PDEK…KRSR and DAGN…GKSS. Residues 200–220 form a helical; Anchor for type IV membrane protein membrane-spanning segment; sequence ILLVILGIIVVITILTAITFF. Residues 221 to 224 are Vesicular-facing; that stretch reads VRGH.

It belongs to the VTI1 family. In terms of assembly, interacts with distinct SNARE complexes that contain either STX5 or STX6. Interacts with NAPA and, to a lesser extent, with NAPG. Identified in a complex containing STX6, STX12, VAMP4 and VTI1A. In terms of tissue distribution, specifically expressed in the neuronal tissues cerebellum, cortex and hippocampus. Isoform 1/VTI1A is expressed in the same neuronal tissues but also in lung, liver, kidney and spleen.

Its subcellular location is the membrane. The protein localises to the cytoplasmic vesicle. The protein resides in the secretory vesicle. It localises to the synaptic vesicle membrane. It is found in the clathrin-coated vesicle membrane. Its subcellular location is the golgi apparatus membrane. In terms of biological role, V-SNARE that mediates vesicle transport pathways through interactions with t-SNAREs on the target membrane. These interactions are proposed to mediate aspects of the specificity of vesicle trafficking and to promote fusion of the lipid bilayers. Involved in vesicular transport from the late endosomes to the trans-Golgi network. Along with VAMP7, involved in an non-conventional RAB1-dependent traffic route to the cell surface used by KCNIP1 and KCND2. May be concerned with increased secretion of cytokines associated with cellular senescence. The polypeptide is Vesicle transport through interaction with t-SNAREs homolog 1A (Vti1a) (Rattus norvegicus (Rat)).